A 635-amino-acid chain; its full sequence is Chaperone protein HtpG (635 aa).

Positions Met1 to Arg346 are a; substrate-binding. The b stretch occupies residues Glu347 to Arg563. A c region spans residues Met564–Ala635.

This sequence belongs to the heat shock protein 90 family. Homodimer.

The protein localises to the cytoplasm. In terms of biological role, molecular chaperone. Has ATPase activity. This is Chaperone protein HtpG from Bordetella parapertussis (strain 12822 / ATCC BAA-587 / NCTC 13253).